The following is a 519-amino-acid chain: Glutamate--cysteine ligase (519 aa).

It belongs to the glutamate--cysteine ligase type 1 family. Type 1 subfamily.

It catalyses the reaction L-cysteine + L-glutamate + ATP = gamma-L-glutamyl-L-cysteine + ADP + phosphate + H(+). Its pathway is sulfur metabolism; glutathione biosynthesis; glutathione from L-cysteine and L-glutamate: step 1/2. The protein is Glutamate--cysteine ligase of Yersinia pseudotuberculosis serotype I (strain IP32953).